The following is a 249-amino-acid chain: Phosphate import ATP-binding protein PstB (249 aa).

Positions Ile4–Ile244 constitute an ABC transporter domain. Gly36–Ser43 lines the ATP pocket.

The protein belongs to the ABC transporter superfamily. Phosphate importer (TC 3.A.1.7) family. In terms of assembly, the complex is composed of two ATP-binding proteins (PstB), two transmembrane proteins (PstC and PstA) and a solute-binding protein (PstS).

It is found in the cell membrane. It carries out the reaction phosphate(out) + ATP + H2O = ADP + 2 phosphate(in) + H(+). Its function is as follows. Part of the ABC transporter complex PstSACB involved in phosphate import. Responsible for energy coupling to the transport system. The chain is Phosphate import ATP-binding protein PstB from Clostridium acetobutylicum (strain ATCC 824 / DSM 792 / JCM 1419 / IAM 19013 / LMG 5710 / NBRC 13948 / NRRL B-527 / VKM B-1787 / 2291 / W).